The chain runs to 361 residues: Queuine tRNA-ribosyltransferase (361 aa).

The Proton acceptor role is filled by Asp-92. Residues 92-96 (DSGGF), Asp-146, Gln-189, and Gly-216 each bind substrate. The tract at residues 247-253 (GVGKPAD) is RNA binding. The active-site Nucleophile is Asp-266. Residues 271 to 275 (TRSGR) are RNA binding; important for wobble base 34 recognition. 4 residues coordinate Zn(2+): Cys-304, Cys-306, Cys-309, and His-335.

The protein belongs to the queuine tRNA-ribosyltransferase family. In terms of assembly, homodimer. Within each dimer, one monomer is responsible for RNA recognition and catalysis, while the other monomer binds to the replacement base PreQ1. It depends on Zn(2+) as a cofactor.

The enzyme catalyses 7-aminomethyl-7-carbaguanine + guanosine(34) in tRNA = 7-aminomethyl-7-carbaguanosine(34) in tRNA + guanine. The protein operates within tRNA modification; tRNA-queuosine biosynthesis. Catalyzes the base-exchange of a guanine (G) residue with the queuine precursor 7-aminomethyl-7-deazaguanine (PreQ1) at position 34 (anticodon wobble position) in tRNAs with GU(N) anticodons (tRNA-Asp, -Asn, -His and -Tyr). Catalysis occurs through a double-displacement mechanism. The nucleophile active site attacks the C1' of nucleotide 34 to detach the guanine base from the RNA, forming a covalent enzyme-RNA intermediate. The proton acceptor active site deprotonates the incoming PreQ1, allowing a nucleophilic attack on the C1' of the ribose to form the product. After dissociation, two additional enzymatic reactions on the tRNA convert PreQ1 to queuine (Q), resulting in the hypermodified nucleoside queuosine (7-(((4,5-cis-dihydroxy-2-cyclopenten-1-yl)amino)methyl)-7-deazaguanosine). The protein is Queuine tRNA-ribosyltransferase of Rickettsia typhi (strain ATCC VR-144 / Wilmington).